A 357-amino-acid chain; its full sequence is Popeye domain-containing protein 1 (357 aa).

The Extracellular portion of the chain corresponds to 1–38; that stretch reads MDTTAISPLTPLGVIPDLKNATSVPFNETACENWKEIH. N-linked (GlcNAc...) asparagine glycosylation is found at Asn-20 and Asn-27. The helical transmembrane segment at 39-59 threads the bilayer; sequence HLVFHVANICFAAGLVIPTTL. Topologically, residues 60-62 are cytoplasmic; the sequence is NLH. The chain crosses the membrane as a helical span at residues 63-83; the sequence is MIFLRGLLTVGCALFIIWATL. The Extracellular segment spans residues 84 to 89; sequence YRCALD. The chain crosses the membrane as a helical span at residues 90 to 110; it reads IMIWNSVFLVVNLLHFIYLVY. The Cytoplasmic segment spans residues 111-357; that stretch reads KRRPIKIEKE…AEKLELQRLP (247 aa). Positions 309–323 are enriched in low complexity; the sequence is GTSSSSSLRPGRTSP. The tract at residues 309–357 is disordered; it reads GTSSSSSLRPGRTSPYLRTSAKMKPIEESVEDDVFEAPSAEKLELQRLP. The span at 347 to 357 shows a compositional bias: basic and acidic residues; it reads SAEKLELQRLP.

The protein belongs to the popeye family. In terms of assembly, homodimer. Homodimerization requires the C-terminus cytoplasmic region. As to expression, expressed in the heart and skeletal muscle (at protein level). Isoform 1 and isoform 4: expressed in heart, muscle, brain, stomach, kidney, lung and spleen.

The protein localises to the lateral cell membrane. It localises to the cell junction. Its subcellular location is the tight junction. It is found in the membrane. The protein resides in the cell membrane. The protein localises to the sarcolemma. It localises to the caveola. Functionally, cell adhesion molecule involved in the establishment and/or maintenance of cell integrity. Involved in the formation and regulation of the tight junction (TJ) paracellular permeability barrier in epithelial cells. Induces primordial adhesive contact and aggregation of epithelial cells in a Ca(2+)-independent manner. Involved in epithelial movement during corneal sheet formation and regeneration. May play a role in VAMP3-mediated vesicular transport and recycling of receptor molecules. May play a role in the regulation of cell shape and movement by modulating the Rho-GTPase activity. May be involved in skeletal muscle and heart development as well as in the maintenance of heart function. May also be involved in striated muscle regeneration and in the regulation of cell spreading. This chain is Popeye domain-containing protein 1 (POPDC1), found in Gallus gallus (Chicken).